A 328-amino-acid polypeptide reads, in one-letter code: Ketol-acid reductoisomerase (NADP(+)) (328 aa).

Residues 1–179 (MRVLYERDGD…GGGAAGIIET (179 aa)) form the KARI N-terminal Rossmann domain. NADP(+) contacts are provided by residues 24–27 (YGSQ), Arg-47, and Ser-51. Residue His-106 is part of the active site. An NADP(+)-binding site is contributed by Gly-132. In terms of domain architecture, KARI C-terminal knotted spans 180-325 (TFVDETETDL…ARLRSRMTCA (146 aa)). Mg(2+) is bound by residues Asp-188, Glu-192, Glu-224, and Glu-228. Position 249 (Ser-249) interacts with substrate.

Belongs to the ketol-acid reductoisomerase family. Mg(2+) is required as a cofactor.

It carries out the reaction (2R)-2,3-dihydroxy-3-methylbutanoate + NADP(+) = (2S)-2-acetolactate + NADPH + H(+). The enzyme catalyses (2R,3R)-2,3-dihydroxy-3-methylpentanoate + NADP(+) = (S)-2-ethyl-2-hydroxy-3-oxobutanoate + NADPH + H(+). The protein operates within amino-acid biosynthesis; L-isoleucine biosynthesis; L-isoleucine from 2-oxobutanoate: step 2/4. Its pathway is amino-acid biosynthesis; L-valine biosynthesis; L-valine from pyruvate: step 2/4. Involved in the biosynthesis of branched-chain amino acids (BCAA). Catalyzes an alkyl-migration followed by a ketol-acid reduction of (S)-2-acetolactate (S2AL) to yield (R)-2,3-dihydroxy-isovalerate. In the isomerase reaction, S2AL is rearranged via a Mg-dependent methyl migration to produce 3-hydroxy-3-methyl-2-ketobutyrate (HMKB). In the reductase reaction, this 2-ketoacid undergoes a metal-dependent reduction by NADPH to yield (R)-2,3-dihydroxy-isovalerate. The protein is Ketol-acid reductoisomerase (NADP(+)) of Tremblaya princeps.